A 97-amino-acid polypeptide reads, in one-letter code: Co-chaperonin GroES (97 aa).

Belongs to the GroES chaperonin family. In terms of assembly, heptamer of 7 subunits arranged in a ring. Interacts with the chaperonin GroEL.

The protein localises to the cytoplasm. Functionally, together with the chaperonin GroEL, plays an essential role in assisting protein folding. The GroEL-GroES system forms a nano-cage that allows encapsulation of the non-native substrate proteins and provides a physical environment optimized to promote and accelerate protein folding. GroES binds to the apical surface of the GroEL ring, thereby capping the opening of the GroEL channel. The sequence is that of Co-chaperonin GroES from Klebsiella pneumoniae subsp. pneumoniae (strain ATCC 700721 / MGH 78578).